The primary structure comprises 513 residues: MKRDLVLVIDFGGQYNQLIARRVRECNVYCEVHPYNLSVDEIKQMNPKGIIFTGGPNSVYGENSPLCDKAIFELGVPIFGICYGSQLMSHMLGGKVATAPVSEYGKTKVDVNIESKLFEGVSSSTICWMSHTDYIEKAPEGFKVIGKTPVCPVAAMECEDKNLYAVQFHPEVMHTEEGTKMLSNFVYNICGCTGDWKMDSFVEKTIEEVRQKVGNGKVLCALSGGVDSSVAAVLLSRAVGKQLTCVFVDHGLLRKNEGDEVEEIFGPNGQYDLNFIRVNAQERFYEKLAGIEEPEQKRKIIGEEFIRVFEEEAKKIGTVDYLVQGTIYPDVIESGLGKSAVIKSHHNVGGLPDYVDFKEIIEPLRLLFKDEVRKAGLELGIPEKLVFRQPFPGPGLGIRIIGEVTAEKVKIVQDADAIYREEIANAGIDKEIGQYFAALTNMRSVGVMGDERTYDYAIALRAVTTSDFMTAESADLPWEVLGKVTTRIVNEVKGVNRVMYDCTGKPPATIEFE.

The Glutamine amidotransferase type-1 domain occupies 5–195 (LVLVIDFGGQ…VYNICGCTGD (191 aa)). Catalysis depends on C82, which acts as the Nucleophile. Catalysis depends on residues H169 and E171. Residues 196–388 (WKMDSFVEKT…LGIPEKLVFR (193 aa)) enclose the GMPS ATP-PPase domain. Residue 223–229 (SGGVDSS) participates in ATP binding.

Homodimer.

It carries out the reaction XMP + L-glutamine + ATP + H2O = GMP + L-glutamate + AMP + diphosphate + 2 H(+). It functions in the pathway purine metabolism; GMP biosynthesis; GMP from XMP (L-Gln route): step 1/1. Its function is as follows. Catalyzes the synthesis of GMP from XMP. The polypeptide is GMP synthase [glutamine-hydrolyzing] (Clostridium botulinum (strain Alaska E43 / Type E3)).